The sequence spans 274 residues: Diaminopimelate epimerase (274 aa).

Substrate is bound by residues N11, Q44, and N64. C73 functions as the Proton donor in the catalytic mechanism. Substrate contacts are provided by residues G74–N75, N157, N190, and E208–R209. Residue C217 is the Proton acceptor of the active site. Residue G218–S219 coordinates substrate.

This sequence belongs to the diaminopimelate epimerase family. As to quaternary structure, homodimer.

The protein resides in the cytoplasm. The enzyme catalyses (2S,6S)-2,6-diaminopimelate = meso-2,6-diaminopimelate. It functions in the pathway amino-acid biosynthesis; L-lysine biosynthesis via DAP pathway; DL-2,6-diaminopimelate from LL-2,6-diaminopimelate: step 1/1. In terms of biological role, catalyzes the stereoinversion of LL-2,6-diaminopimelate (L,L-DAP) to meso-diaminopimelate (meso-DAP), a precursor of L-lysine and an essential component of the bacterial peptidoglycan. The sequence is that of Diaminopimelate epimerase from Glaesserella parasuis serovar 5 (strain SH0165) (Haemophilus parasuis).